A 324-amino-acid chain; its full sequence is D-alanine--D-alanine ligase (324 aa).

Residues 112–312 (KAVLAAAGVT…FDQLVLWIVE (201 aa)) enclose the ATP-grasp domain. 139–193 (LQPPYVVKPNAEGSSVGVFIIKEGANRPPEEVGAPSWTFGEEVMVEPYIQGMELA) is an ATP binding site. Mg(2+) is bound by residues Asp-265, Glu-279, and Asn-281.

This sequence belongs to the D-alanine--D-alanine ligase family. It depends on Mg(2+) as a cofactor. Mn(2+) serves as cofactor.

The protein localises to the cytoplasm. It catalyses the reaction 2 D-alanine + ATP = D-alanyl-D-alanine + ADP + phosphate + H(+). It participates in cell wall biogenesis; peptidoglycan biosynthesis. Functionally, cell wall formation. In Caulobacter vibrioides (strain ATCC 19089 / CIP 103742 / CB 15) (Caulobacter crescentus), this protein is D-alanine--D-alanine ligase.